We begin with the raw amino-acid sequence, 132 residues long: Large ribosomal subunit protein uL14 (132 aa).

Belongs to the universal ribosomal protein uL14 family. In terms of assembly, part of the 50S ribosomal subunit. Forms a cluster with proteins L3 and L24e, part of which may contact the 16S rRNA in 2 intersubunit bridges.

Binds to 23S rRNA. Forms part of two intersubunit bridges in the 70S ribosome. The chain is Large ribosomal subunit protein uL14 from Thermoplasma acidophilum (strain ATCC 25905 / DSM 1728 / JCM 9062 / NBRC 15155 / AMRC-C165).